Here is a 477-residue protein sequence, read N- to C-terminus: PTS system glucose-specific EIICB component (477 aa).

In terms of domain architecture, PTS EIIC type-1 spans 1 to 388 (MFKNVFSSLQ…FNLKTPGREE (388 aa)). Helical transmembrane passes span 20-40 (VSVL…FTLI), 51-71 (TGGS…ALGF), 76-96 (GVAA…LSAV), 112-132 (NFSD…AYMF), 152-172 (FVPI…SLIW), 250-270 (LSGG…AIWH), 280-300 (IGSI…TEPI), 304-324 (FILV…LSFP), and 354-374 (IFLF…IFYF). In terms of domain architecture, PTS EIIB type-1 spans 399–477 (IEIAPYIVEA…TAIDEYINNI (79 aa)). Cysteine 421 (phosphocysteine intermediate; for EIIB activity) is an active-site residue. At cysteine 421 the chain carries Phosphocysteine.

The protein localises to the cell inner membrane. It catalyses the reaction N(pros)-phospho-L-histidyl-[protein] + D-glucose(out) = D-glucose 6-phosphate(in) + L-histidyl-[protein]. Its function is as follows. The phosphoenolpyruvate-dependent sugar phosphotransferase system (sugar PTS), a major carbohydrate active transport system, catalyzes the phosphorylation of incoming sugar substrates concomitantly with their translocation across the cell membrane. The enzyme II complex composed of PtsG and Crr is involved in glucose transport. In Buchnera aphidicola subsp. Schizaphis graminum (strain Sg), this protein is PTS system glucose-specific EIICB component (ptsG).